Consider the following 371-residue polypeptide: 4-hydroxy-3-methylbut-2-en-1-yl diphosphate synthase (flavodoxin) (371 aa).

[4Fe-4S] cluster-binding residues include cysteine 272, cysteine 275, cysteine 307, and glutamate 314.

The protein belongs to the IspG family. Requires [4Fe-4S] cluster as cofactor.

It carries out the reaction (2E)-4-hydroxy-3-methylbut-2-enyl diphosphate + oxidized [flavodoxin] + H2O + 2 H(+) = 2-C-methyl-D-erythritol 2,4-cyclic diphosphate + reduced [flavodoxin]. It participates in isoprenoid biosynthesis; isopentenyl diphosphate biosynthesis via DXP pathway; isopentenyl diphosphate from 1-deoxy-D-xylulose 5-phosphate: step 5/6. Functionally, converts 2C-methyl-D-erythritol 2,4-cyclodiphosphate (ME-2,4cPP) into 1-hydroxy-2-methyl-2-(E)-butenyl 4-diphosphate. The chain is 4-hydroxy-3-methylbut-2-en-1-yl diphosphate synthase (flavodoxin) from Magnetococcus marinus (strain ATCC BAA-1437 / JCM 17883 / MC-1).